We begin with the raw amino-acid sequence, 312 residues long: DNA-directed RNA polymerase subunit alpha (312 aa).

The alpha N-terminal domain (alpha-NTD) stretch occupies residues 1-229 (MLQYQIDRID…ELFQPLATVS (229 aa)). The alpha C-terminal domain (alpha-CTD) stretch occupies residues 239 to 312 (EPAAEAQIPL…ISIPQSRTSA (74 aa)).

This sequence belongs to the RNA polymerase alpha chain family. In cyanobacteria the RNAP catalytic core is composed of 2 alpha, 1 beta, 1 beta', 1 gamma and 1 omega subunit. When a sigma factor is associated with the core the holoenzyme is formed, which can initiate transcription.

It catalyses the reaction RNA(n) + a ribonucleoside 5'-triphosphate = RNA(n+1) + diphosphate. DNA-dependent RNA polymerase catalyzes the transcription of DNA into RNA using the four ribonucleoside triphosphates as substrates. The polypeptide is DNA-directed RNA polymerase subunit alpha (Prochlorococcus marinus (strain NATL1A)).